Here is a 390-residue protein sequence, read N- to C-terminus: Lipid-A-disaccharide synthase (390 aa).

It belongs to the LpxB family.

It catalyses the reaction a lipid X + a UDP-2-N,3-O-bis[(3R)-3-hydroxyacyl]-alpha-D-glucosamine = a lipid A disaccharide + UDP + H(+). It participates in bacterial outer membrane biogenesis; LPS lipid A biosynthesis. Condensation of UDP-2,3-diacylglucosamine and 2,3-diacylglucosamine-1-phosphate to form lipid A disaccharide, a precursor of lipid A, a phosphorylated glycolipid that anchors the lipopolysaccharide to the outer membrane of the cell. This is Lipid-A-disaccharide synthase from Haemophilus ducreyi (strain 35000HP / ATCC 700724).